Reading from the N-terminus, the 258-residue chain is Tryptophan synthase alpha chain (258 aa).

Catalysis depends on proton acceptor residues E52 and D63.

Belongs to the TrpA family. In terms of assembly, tetramer of two alpha and two beta chains.

The catalysed reaction is (1S,2R)-1-C-(indol-3-yl)glycerol 3-phosphate + L-serine = D-glyceraldehyde 3-phosphate + L-tryptophan + H2O. Its pathway is amino-acid biosynthesis; L-tryptophan biosynthesis; L-tryptophan from chorismate: step 5/5. In terms of biological role, the alpha subunit is responsible for the aldol cleavage of indoleglycerol phosphate to indole and glyceraldehyde 3-phosphate. The polypeptide is Tryptophan synthase alpha chain (Streptococcus pneumoniae (strain P1031)).